The primary structure comprises 584 residues: Pentatricopeptide repeat-containing protein At2g01510, mitochondrial (584 aa).

The transit peptide at 1 to 20 directs the protein to the mitochondrion; sequence MLAKQTPLTKQMLSELLRAS. 9 PPR repeats span residues 73–107, 108–142, 143–173, 174–208, 209–243, 244–274, 275–309, 310–344, and 348–378; these read RIFL…GVRP, DEFT…GFGC, LGIV…MQVK, DLVA…AVQF, DSFT…EIDC, NIIV…MKQR, NVVS…GLRP, NYVT…NDKN, and RKEH…MPVE. Residues 383–458 are type E motif; it reads IWGALLGACA…VAAYSSVEFE (76 aa). Residues 459-489 are type E(+) motif; the sequence is GKIHFFNRGDKSHPQSKAIYEKLDEILKKIR. Positions 490-584 are type DYW motif; it reads KMGYVPDTCS…NGVCSCKEFW (95 aa).

The protein belongs to the PPR family. PCMP-H subfamily.

The protein resides in the mitochondrion. This is Pentatricopeptide repeat-containing protein At2g01510, mitochondrial (PCMP-H37) from Arabidopsis thaliana (Mouse-ear cress).